The chain runs to 372 residues: 4-hydroxy-3-methylbut-2-en-1-yl diphosphate synthase (flavodoxin) (372 aa).

4 residues coordinate [4Fe-4S] cluster: cysteine 270, cysteine 273, cysteine 305, and glutamate 312.

The protein belongs to the IspG family. Requires [4Fe-4S] cluster as cofactor.

It carries out the reaction (2E)-4-hydroxy-3-methylbut-2-enyl diphosphate + oxidized [flavodoxin] + H2O + 2 H(+) = 2-C-methyl-D-erythritol 2,4-cyclic diphosphate + reduced [flavodoxin]. It functions in the pathway isoprenoid biosynthesis; isopentenyl diphosphate biosynthesis via DXP pathway; isopentenyl diphosphate from 1-deoxy-D-xylulose 5-phosphate: step 5/6. Converts 2C-methyl-D-erythritol 2,4-cyclodiphosphate (ME-2,4cPP) into 1-hydroxy-2-methyl-2-(E)-butenyl 4-diphosphate. The polypeptide is 4-hydroxy-3-methylbut-2-en-1-yl diphosphate synthase (flavodoxin) (Shewanella amazonensis (strain ATCC BAA-1098 / SB2B)).